The primary structure comprises 416 residues: 3-isopropylmalate dehydratase large subunit (416 aa).

3 residues coordinate [4Fe-4S] cluster: Cys-299, Cys-357, and Cys-360.

This sequence belongs to the aconitase/IPM isomerase family. LeuC type 2 subfamily. As to quaternary structure, heterodimer of LeuC and LeuD. Requires [4Fe-4S] cluster as cofactor.

It catalyses the reaction (2R,3S)-3-isopropylmalate = (2S)-2-isopropylmalate. Its pathway is amino-acid biosynthesis; L-leucine biosynthesis; L-leucine from 3-methyl-2-oxobutanoate: step 2/4. Catalyzes the isomerization between 2-isopropylmalate and 3-isopropylmalate, via the formation of 2-isopropylmaleate. The protein is 3-isopropylmalate dehydratase large subunit of Saccharolobus solfataricus (strain ATCC 35092 / DSM 1617 / JCM 11322 / P2) (Sulfolobus solfataricus).